The chain runs to 717 residues: Serologically defined colon cancer antigen 8 homolog (717 aa).

Phosphoserine is present on residues serine 4 and serine 28. Residues 84 to 115 (QTNKENETSPPRRRKLSPSRPSECDDGSMPTM) form a disordered region. Coiled coils occupy residues 129–168 (IHHLEAEVKFCKDELSGMKNRVQVVVLENERLQQELKSQR), 221–278 (DANK…LAAS), 352–590 (EEAN…SEQY), and 622–712 (RSQI…LPSM). A sufficient for homodimerization region spans residues 216-717 (TASTGDANKW…QLPSMPQSDC (502 aa)).

As to quaternary structure, homodimer. Interacts with OFD1; the interaction is direct. Interacts with FAM161A. Interacts with RABEP2, ERC1 and CEP131. In terms of tissue distribution, expressed in liver, kidney, spleen, brain, heart and muscle. Expressed in photoreceptor cells of the retina.

It is found in the cytoplasm. The protein localises to the cytoskeleton. It localises to the microtubule organizing center. The protein resides in the centrosome. Its subcellular location is the centriole. It is found in the cilium basal body. The protein localises to the cell junction. In terms of biological role, plays a role in the establishment of cell polarity and epithelial lumen formation. Also plays an essential role in ciliogenesis and subsequent Hedgehog signaling pathway that requires the presence of intact primary cilia for pathway activation. Mechanistically, interacts with and mediates RABEP2 centrosomal localization which is critical for ciliogenesis. This is Serologically defined colon cancer antigen 8 homolog (Sdccag8) from Mus musculus (Mouse).